Here is a 362-residue protein sequence, read N- to C-terminus: Protein MGF 360-2L (362 aa).

Belongs to the asfivirus MGF 360 family.

Plays a role in virus cell tropism, and may be required for efficient virus replication in macrophages. This African swine fever virus (strain Badajoz 1971 Vero-adapted) (Ba71V) protein is Protein MGF 360-2L.